The chain runs to 148 residues: 3-dehydroquinate dehydratase (148 aa).

The active-site Proton acceptor is Tyr26. Residues Asn75, His81, and Asp88 each contribute to the substrate site. Residue His101 is the Proton donor of the active site. Substrate is bound by residues 102-103 (LS) and Arg112.

Belongs to the type-II 3-dehydroquinase family. As to quaternary structure, homododecamer.

The catalysed reaction is 3-dehydroquinate = 3-dehydroshikimate + H2O. It functions in the pathway metabolic intermediate biosynthesis; chorismate biosynthesis; chorismate from D-erythrose 4-phosphate and phosphoenolpyruvate: step 3/7. In terms of biological role, catalyzes a trans-dehydration via an enolate intermediate. In Shewanella frigidimarina (strain NCIMB 400), this protein is 3-dehydroquinate dehydratase.